The sequence spans 451 residues: Phosphoglucosamine mutase (451 aa).

The Phosphoserine intermediate role is filled by Ser107. Residues Ser107, Asp246, Asp248, and Asp250 each coordinate Mg(2+). Ser107 is subject to Phosphoserine.

It belongs to the phosphohexose mutase family. It depends on Mg(2+) as a cofactor. In terms of processing, activated by phosphorylation.

The enzyme catalyses alpha-D-glucosamine 1-phosphate = D-glucosamine 6-phosphate. Its function is as follows. Catalyzes the conversion of glucosamine-6-phosphate to glucosamine-1-phosphate. This is Phosphoglucosamine mutase from Azoarcus sp. (strain BH72).